The sequence spans 389 residues: Alanine racemase (389 aa).

Lys46 acts as the Proton acceptor; specific for D-alanine in catalysis. Lys46 is subject to N6-(pyridoxal phosphate)lysine. A substrate-binding site is contributed by Arg144. Tyr275 serves as the catalytic Proton acceptor; specific for L-alanine. Met323 serves as a coordination point for substrate.

The protein belongs to the alanine racemase family. Requires pyridoxal 5'-phosphate as cofactor.

It catalyses the reaction L-alanine = D-alanine. It functions in the pathway amino-acid biosynthesis; D-alanine biosynthesis; D-alanine from L-alanine: step 1/1. Its function is as follows. Catalyzes the interconversion of L-alanine and D-alanine. May also act on other amino acids. This Mycolicibacterium smegmatis (strain ATCC 700084 / mc(2)155) (Mycobacterium smegmatis) protein is Alanine racemase (alr).